Consider the following 257-residue polypeptide: Zinc transporter ZupT (257 aa).

Transmembrane regions (helical) follow at residues 5–25 (LILT…GVLG), 32–52 (LLAF…LMEM), 61–81 (GMSP…YFGL), 109–129 (AILL…ATFV), 137–157 (LGFG…LAVA), 171–191 (ILWA…AWLI), 195–215 (MISP…MVAL), and 236–256 (GVLC…TAGI). Residues asparagine 120 and glutamate 123 each coordinate Fe(2+). Residues glutamate 123 and histidine 148 each contribute to the Zn(2+) site. Positions 149, 152, and 181 each coordinate Fe(2+). Glutamate 152 serves as a coordination point for Zn(2+).

It belongs to the ZIP transporter (TC 2.A.5) family. ZupT subfamily.

It is found in the cell inner membrane. The catalysed reaction is Zn(2+)(in) = Zn(2+)(out). Its function is as follows. Mediates zinc uptake. May also transport other divalent cations. This chain is Zinc transporter ZupT, found in Shigella flexneri serotype 5b (strain 8401).